An 832-amino-acid chain; its full sequence is Protein P (832 aa).

Residues 1 to 177 (MPLSYQHFRK…FCGSPYSWEQ (177 aa)) form a terminal protein domain (TP) region. The tract at residues 178-335 (ELQHGAESFH…YCLSHLVSLL (158 aa)) is spacer. Residues 336-679 (DDWGPCTEHG…YSTLYPVARQ (344 aa)) form a polymerase/reverse transcriptase domain (RT) region. A Reverse transcriptase domain is found at 346-589 (EHHIRIPRTP…YSLHFMGYVI (244 aa)). 3 residues coordinate Mg(2+): aspartate 418, aspartate 540, and aspartate 541.

The protein belongs to the hepadnaviridae P protein family.

The enzyme catalyses DNA(n) + a 2'-deoxyribonucleoside 5'-triphosphate = DNA(n+1) + diphosphate. It catalyses the reaction Endonucleolytic cleavage to 5'-phosphomonoester.. Activated by host HSP70 and HSP40 in vitro to be able to bind the epsilon loop of the pgRNA. Because deletion of the RNase H region renders the protein partly chaperone-independent, the chaperones may be needed indirectly to relieve occlusion of the RNA-binding site by this domain. Inhibited by several reverse-transcriptase inhibitors: Lamivudine, Adefovir and Entecavir. In terms of biological role, multifunctional enzyme that converts the viral RNA genome into dsDNA in viral cytoplasmic capsids. This enzyme displays a DNA polymerase activity that can copy either DNA or RNA templates, and a ribonuclease H (RNase H) activity that cleaves the RNA strand of RNA-DNA heteroduplexes in a partially processive 3'- to 5'-endonucleasic mode. Neo-synthesized pregenomic RNA (pgRNA) are encapsidated together with the P protein, and reverse-transcribed inside the nucleocapsid. Initiation of reverse-transcription occurs first by binding the epsilon loop on the pgRNA genome, and is initiated by protein priming, thereby the 5'-end of (-)DNA is covalently linked to P protein. Partial (+)DNA is synthesized from the (-)DNA template and generates the relaxed circular DNA (RC-DNA) genome. After budding and infection, the RC-DNA migrates in the nucleus, and is converted into a plasmid-like covalently closed circular DNA (cccDNA). The activity of P protein does not seem to be necessary for cccDNA generation, and is presumably released from (+)DNA by host nuclear DNA repair machinery. The chain is Protein P from Pan troglodytes (Chimpanzee).